The chain runs to 162 residues: Protein lon-8 (162 aa).

An N-terminal signal peptide occupies residues 1–23 (MRNSRFCAILAVISAISVSYVLA).

The protein localises to the secreted. Its function is as follows. Secreted protein that is involved in larval elongation, early adult growth and male tail development. This is Protein lon-8 from Caenorhabditis elegans.